The sequence spans 852 residues: DNA polymerase kappa (852 aa).

The 256-residue stretch at 102-357 (IVHVDMDAFY…LPIRKVSGIG (256 aa)) folds into the UmuC domain. Mg(2+)-binding residues include D106 and D197. Residues 252 to 273 (FEDSPPDLQPQGSPFQLNSEEQ) form a disordered region. Over residues 261–273 (PQGSPFQLNSEEQ) the composition is skewed to polar residues. 2 UBZ4-type zinc fingers span residues 619-649 (TFICPVCFREQEGVSLEAFNEHVDECLDGPS) and 761-791 (ALVCPVCNLEQETSDLTLFNIHVDICLNKGI). Residues C622, C625, H640, C644, C764, C767, H782, and C786 each contribute to the Zn(2+) site. Positions 798-852 (SEGNSVKQPKESSRSTDRLQKASGRTKRPGTKTKSSTLKKTKPRDPRHTLDGFFK) are disordered. Residues 805–817 (QPKESSRSTDRLQ) show a composition bias toward basic and acidic residues. The span at 821–839 (GRTKRPGTKTKSSTLKKTK) shows a compositional bias: basic residues. Residues 840-852 (PRDPRHTLDGFFK) are compositionally biased toward basic and acidic residues.

Belongs to the DNA polymerase type-Y family. As to quaternary structure, interacts with PCNA. Interacts with REV1. The cofactor is Mg(2+). Mn(2+) serves as cofactor. As to expression, detected at low levels in heart, brain, lung, liver, kidney and testis.

It localises to the nucleus. It catalyses the reaction DNA(n) + a 2'-deoxyribonucleoside 5'-triphosphate = DNA(n+1) + diphosphate. Functionally, DNA polymerase specifically involved in DNA repair. Plays an important role in translesion synthesis, where the normal high-fidelity DNA polymerases cannot proceed and DNA synthesis stalls. Depending on the context, it inserts the correct base, but causes frequent base transitions, transversions and frameshifts. Lacks 3'-5' proofreading exonuclease activity. Forms a Schiff base with 5'-deoxyribose phosphate at abasic sites, but does not have lyase activity. The protein is DNA polymerase kappa (Polk) of Mus musculus (Mouse).